The sequence spans 408 residues: PCI domain-containing protein 2 (408 aa).

Ala2 is modified (N-acetylalanine). Ser45 is subject to Phosphoserine. Residues 210–400 (VTYRYYVGRK…QKLVVSKQNP (191 aa)) enclose the PCI domain.

The protein belongs to the CSN12 family. In terms of assembly, component of the nuclear pore complex (NPC)-associated TREX-2 complex (transcription and export complex 2), composed of at least GANP, 2 copies of ENY2, PCID2, SEM1/DSS1, and either centrin CETN2 or centrin CETN3. The TREX-2 complex also associates with ALYREF/ALY and with the nucleoporin NUP153. Interacts with BRCA2. Interacts with SRCAP chromatin remodeling complex component ZNHIT1; the interaction results in inhibition of SRCAP complex activity, preventing the deposition of histone variant H2AZ1/H2A.Z to lymphoid fate regulator genes and restricting lymphoid lineage commitment.

Its subcellular location is the cytoplasm. It is found in the nucleus. The protein localises to the nuclear pore complex. In terms of biological role, required for B-cell survival through the regulation of the expression of cell-cycle checkpoint MAD2L1 protein during B cell differentiation. As a component of the TREX-2 complex, involved in the export of mRNAs to the cytoplasm through the nuclear pores. Binds and stabilizes BRCA2 and is thus involved in the control of R-loop-associated DNA damage and transcription-associated genomic instability. Blocks the activity of the SRCAP chromatin remodeling complex by interacting with SRCAP complex member ZNHIT1 and inhibiting its interaction with the complex. This prevents the deposition of histone variant H2AZ1/H2A.Z at the nucleosomes of key lymphoid fate regulator genes which suppresses their expression and restricts lymphoid lineage commitment. The sequence is that of PCI domain-containing protein 2 (PCID2) from Bos taurus (Bovine).